Reading from the N-terminus, the 309-residue chain is MRIFFASSDGIALEVLKKISDQYDVVGVLTAPDKPSGRGLSLKVNDIKREALSRKITVLQPVVLDADVINLVKSLEPELMLVFSYGKIFKQEFLDIFPVGCINIHPSLLPKYRGPSPIQTVILNGDSVSGITVQKMTLEMDSGNILAQSQFEIKSFNTSVDIFEYVSLNSFDLVIEALNKLLKGDIGIVQDKNNATYCSFLGKEHRTIDFKLSAFDIKNKINAYNPWPLARARLDNNEIIFYRADFISTNDYDDQVIGKIIAFDPSKGLLVKTGDGILVVLELQRIGKKVLDCVSFYHGNRDLIGKVFS.

107 to 110 contributes to the (6S)-5,6,7,8-tetrahydrofolate binding site; the sequence is SLLP.

It belongs to the Fmt family.

It carries out the reaction L-methionyl-tRNA(fMet) + (6R)-10-formyltetrahydrofolate = N-formyl-L-methionyl-tRNA(fMet) + (6S)-5,6,7,8-tetrahydrofolate + H(+). Functionally, attaches a formyl group to the free amino group of methionyl-tRNA(fMet). The formyl group appears to play a dual role in the initiator identity of N-formylmethionyl-tRNA by promoting its recognition by IF2 and preventing the misappropriation of this tRNA by the elongation apparatus. The chain is Methionyl-tRNA formyltransferase from Borrelia recurrentis (strain A1).